The sequence spans 560 residues: 2-isopropylmalate synthase (560 aa).

The Pyruvate carboxyltransferase domain maps to 30-303 (PVWCSVDLRD…DPEIDCSNIE (274 aa)). Mg(2+) is bound by residues Asp39, His242, His244, and Asn278. The regulatory domain stretch occupies residues 437–560 (QPEGRLRFVD…RVLDVKAGKA (124 aa)).

Belongs to the alpha-IPM synthase/homocitrate synthase family. LeuA type 2 subfamily. In terms of assembly, homodimer. Requires Mg(2+) as cofactor.

The protein localises to the cytoplasm. The catalysed reaction is 3-methyl-2-oxobutanoate + acetyl-CoA + H2O = (2S)-2-isopropylmalate + CoA + H(+). It participates in amino-acid biosynthesis; L-leucine biosynthesis; L-leucine from 3-methyl-2-oxobutanoate: step 1/4. Functionally, catalyzes the condensation of the acetyl group of acetyl-CoA with 3-methyl-2-oxobutanoate (2-ketoisovalerate) to form 3-carboxy-3-hydroxy-4-methylpentanoate (2-isopropylmalate). The polypeptide is 2-isopropylmalate synthase (Rhizobium johnstonii (strain DSM 114642 / LMG 32736 / 3841) (Rhizobium leguminosarum bv. viciae)).